The chain runs to 380 residues: Chaperone protein DnaJ (380 aa).

Residues 5–70 (DYYEVLGVER…SKRAAYDQYG (66 aa)) enclose the J domain. Residues 139 to 217 (GTNVNIRVPT…CHGEGRVEES (79 aa)) form a CR-type zinc finger. The Zn(2+) site is built by Cys-152, Cys-155, Cys-169, Cys-172, Cys-191, Cys-194, Cys-205, and Cys-208. CXXCXGXG motif repeat units lie at residues 152-159 (CKPCDGSG), 169-176 (CPTCGGIG), 191-198 (CPRCHGHG), and 205-212 (CDSCHGEG). The tract at residues 224 to 245 (VPPGVDTGDRIRLSGEGEAGTQ) is disordered.

The protein belongs to the DnaJ family. In terms of assembly, homodimer. Requires Zn(2+) as cofactor.

It is found in the cytoplasm. Participates actively in the response to hyperosmotic and heat shock by preventing the aggregation of stress-denatured proteins and by disaggregating proteins, also in an autonomous, DnaK-independent fashion. Unfolded proteins bind initially to DnaJ; upon interaction with the DnaJ-bound protein, DnaK hydrolyzes its bound ATP, resulting in the formation of a stable complex. GrpE releases ADP from DnaK; ATP binding to DnaK triggers the release of the substrate protein, thus completing the reaction cycle. Several rounds of ATP-dependent interactions between DnaJ, DnaK and GrpE are required for fully efficient folding. Also involved, together with DnaK and GrpE, in the DNA replication of plasmids through activation of initiation proteins. This chain is Chaperone protein DnaJ, found in Pseudomonas syringae pv. syringae (strain B728a).